The sequence spans 1131 residues: Plasma membrane ATPase (1131 aa).

Transmembrane regions (helical) follow at residues 77-97 (PVLVFLGYMWNPLAWAMEAAA), 98-118 (IISIALLDVADFVLIVGLLLI), 151-171 (GAIVTIDAVNLVPGDVILIRL), 231-251 (AVVYATGVNTFFGRAAALISG), 265-285 (MSAICIVTILLWVVVELAVQF), and 305-325 (MLVVLVGGIPIAMPTVLSVTL). The active-site 4-aspartylphosphate intermediate is aspartate 357. Residues aspartate 615 and aspartate 619 each coordinate Mg(2+). 5 helical membrane passes run 642-662 (AADIVLTEPGLSTIVTAVIGA), 689-709 (LITVIYDWYFPTILIVIMAVF), 733-753 (ITNIFIMGMVYGLYLTLSTWA), 884-904 (LAFFFAQVGATLFGIFGLGGF), and 946-966 (VIGCGGYVIVAWIWSAIWYVL). Basic and acidic residues predominate over residues 994–1010 (KRSLDRRSKDDIGDKEF). 2 disordered regions span residues 994–1023 (KRSLDRRSKDDIGDKEFTGPSGMVPANYSN) and 1067–1131 (RRSM…TIRE). Residues 1089 to 1100 (SRTSNTLSTGSK) show a composition bias toward polar residues. A compositionally biased stretch (basic and acidic residues) spans 1118-1131 (IKPDKYDFASTIRE).

The protein belongs to the cation transport ATPase (P-type) (TC 3.A.3) family. Type IIIA subfamily.

It is found in the cell membrane. The catalysed reaction is ATP + H2O + H(+)(in) = ADP + phosphate + 2 H(+)(out). Functionally, the plasma membrane ATPase of plants and fungi is a hydrogen ion pump. The proton gradient it generates drives the active transport of nutrients by H(+)-symport. The resulting external acidification and/or internal alkinization may mediate growth responses. In Dunaliella bioculata (Green alga), this protein is Plasma membrane ATPase (PMA1).